Reading from the N-terminus, the 513-residue chain is MSDLVRSPARAVMVLGTSSGAGKSWLATALCRWYARQGLKVAPFKAQNMSNNARVVPGLIGADGAQPMGEIGSAQYFQALAARCVPGVMHNPVLLKPEADTRSQVVVLGEVRRDLAEVPWRERSEALWPHARAALQQLMAHNDVVVIEGAGSPAEINLHASDYVNMRTALAAQAACLVITDIDRGGAFAHLYGTHQLLPADERALIRGFVLNRFRGDAALLAPGPEQLQALTGVPTIGVLPMWREHGLPEEDGLYEPGGHTAAPGHAAQRLRIAIVAYPRISNLDEFQPLRNLPGVQLVWARQPADLERADWVILPGSKHSQADLAWLRAQRLDAAIARHAAAGGALLGICGGLQMLGEALIDLHGVEGGFDALGGNGPGLGLLPLVTQFDPHKLLRPTRASFGATHGVWAALAGVAFDGYEIHNGRSIQHPAMASALPALRSTCGDTIGWQNGSVLGVYTHGLFESPAVLQALFGAGCRTLDSVFDGLADFAERHFSLGALAGLLSPKQPPG.

The region spanning 270–470 is the GATase cobBQ-type domain; sequence RLRIAIVAYP…THGLFESPAV (201 aa). The active-site Nucleophile is the Cys351. His462 is a catalytic residue.

This sequence belongs to the CobB/CobQ family. CobQ subfamily.

Its pathway is cofactor biosynthesis; adenosylcobalamin biosynthesis. Functionally, catalyzes amidations at positions B, D, E, and G on adenosylcobyrinic A,C-diamide. NH(2) groups are provided by glutamine, and one molecule of ATP is hydrogenolyzed for each amidation. The protein is Cobyric acid synthase of Leptothrix cholodnii (strain ATCC 51168 / LMG 8142 / SP-6) (Leptothrix discophora (strain SP-6)).